The chain runs to 90 residues: Acylphosphatase (90 aa).

Positions 4–90 (TVHLRITGHV…KGQYKDFRIY (87 aa)) constitute an Acylphosphatase-like domain. Catalysis depends on residues R19 and N37.

The protein belongs to the acylphosphatase family.

The catalysed reaction is an acyl phosphate + H2O = a carboxylate + phosphate + H(+). In Caldanaerobacter subterraneus subsp. tengcongensis (strain DSM 15242 / JCM 11007 / NBRC 100824 / MB4) (Thermoanaerobacter tengcongensis), this protein is Acylphosphatase (acyP).